Here is a 221-residue protein sequence, read N- to C-terminus: Ethylene-inducing xylanase 4 (221 aa).

Positions 1-19 are cleaved as a signal peptide; it reads MVSFSTLLTACTAITGALG. Residues 28–218 form the GH11 domain; sequence NVTPNAQGTH…SAGRASVVVE (191 aa). Residue Asn-96 is glycosylated (N-linked (GlcNAc...) asparagine). Glu-114 serves as the catalytic Nucleophile. Catalysis depends on Glu-205, which acts as the Proton donor.

It belongs to the glycosyl hydrolase 11 (cellulase G) family.

The enzyme catalyses Endohydrolysis of (1-&gt;4)-beta-D-xylosidic linkages in xylans.. It participates in glycan degradation; xylan degradation. Endo-1,4-beta-xylanase involved in the hydrolysis of xylan, a major structural heterogeneous polysaccharide found in plant biomass representing the second most abundant polysaccharide in the biosphere, after cellulose. May act as an elicitor of plant defense responses in certain plants but does not exhibit any cell death when transiently expressed in N.benthamiana. In Verticillium dahliae (strain VdLs.17 / ATCC MYA-4575 / FGSC 10137) (Verticillium wilt), this protein is Ethylene-inducing xylanase 4.